Reading from the N-terminus, the 230-residue chain is Protein FAM3A (230 aa).

The first 33 residues, M1 to G33, serve as a signal peptide directing secretion. Disulfide bonds link C59/C87 and C65/C222. The region spanning E68–R226 is the GG-type lectin domain.

This sequence belongs to the FAM3 family.

The protein resides in the secreted. The polypeptide is Protein FAM3A (Fam3a) (Mus musculus (Mouse)).